Reading from the N-terminus, the 223-residue chain is Alpha-S2-casein (223 aa).

An N-terminal signal peptide occupies residues 1 to 15; sequence MKFFIFTCLLAVALA. Phosphoserine is present on residues serine 23, serine 24, serine 25, serine 72, serine 73, serine 74, serine 77, serine 145, serine 147, serine 151, and serine 159. A repeat spans 77–141; it reads SAEVAPEEVK…AGPFTPTVNR (65 aa). Residues 159 to 223 constitute a repeat; it reads STEVFTKKTK…TNAIPYVRYL (65 aa).

This sequence belongs to the alpha-casein family. In terms of tissue distribution, mammary gland specific. Secreted in milk.

It is found in the secreted. Important role in the capacity of milk to transport calcium phosphate. The sequence is that of Alpha-S2-casein (CSN1S2) from Ovis aries (Sheep).